We begin with the raw amino-acid sequence, 420 residues long: Ammonia monooxygenase beta subunit (420 aa).

The N-terminal stretch at 1 to 25 (MGIKNLYKRGVMGLYGVAYAVAALA) is a signal peptide. Residues histidine 38, histidine 142, and histidine 144 each contribute to the Cu cation site. The next 2 membrane-spanning stretches (helical) occupy residues 193 to 213 (GIFWHVVWMSIGIFWIGVFTA) and 240 to 260 (ITWVLAILTLALVWGGYRYTE).

The soluble ammonia monooxygenase is a nonamer composed of three alpha subunits (AmoA), three beta subunits (AmoB) and three gamma subunits (Cytochrome c1 PetC). Cu(2+) is required as a cofactor.

The protein resides in the cell membrane. It localises to the cytoplasm. The catalysed reaction is AH2 + NH4(+) + O2 = hydroxylamine + A + H2O + H(+). Its activity is regulated as follows. In vitro, inhibited by acetylene. In terms of biological role, part of the ammonia monooxygenase complex, which catalyzes the oxidation of ammonia to hydroxylamine, the first reaction in the process of ammonia oxidation to nitrite. The chain is Ammonia monooxygenase beta subunit from Nitrosomonas europaea (strain ATCC 19718 / CIP 103999 / KCTC 2705 / NBRC 14298).